The following is a 153-amino-acid chain: Transcriptional repressor NrdR 3 (153 aa).

The disordered stretch occupies residues 1 to 26 (MRCPFCGHDDTQVKDSRPTEDNSAIR). The segment at 3–34 (CPFCGHDDTQVKDSRPTEDNSAIRRRRSCPEC) is a zinc-finger region. The span at 7 to 24 (GHDDTQVKDSRPTEDNSA) shows a compositional bias: basic and acidic residues. Residues 49–139 (LVVIKKDGGR…VYRNFREAKD (91 aa)) enclose the ATP-cone domain.

The protein belongs to the NrdR family. The cofactor is Zn(2+).

In terms of biological role, negatively regulates transcription of bacterial ribonucleotide reductase nrd genes and operons by binding to NrdR-boxes. The chain is Transcriptional repressor NrdR 3 from Paramagnetospirillum magneticum (strain ATCC 700264 / AMB-1) (Magnetospirillum magneticum).